A 1134-amino-acid polypeptide reads, in one-letter code: Myosin-4 (1134 aa).

In terms of domain architecture, Myosin N-terminal SH3-like spans 110–160; that stretch reads REKLCVWCRVAANGQWHLGKIHSTSSSDDVCVMLSANDDVRTMEEIFPANP. Positions 164–830 constitute a Myosin motor domain; that stretch reads EGVEDLTQLS…VISVLEERKK (667 aa). Residues 255–262 and 304–312 each bind ATP; these read GESGAGKT and NDNSSRFGK. Actin-binding regions lie at residues 589 to 623 and 710 to 732; these read LIEKKPIGLVSLLNEESNFPKATDTTFANKLKQHL and LFKLMNKLEDTTPHFIRCIKPNS. IQ domains lie at 832–861, 855–884, and 891–920; these read VLRGILGLQKQFRGYQTREYFHNMRNAAVI, MRNAAVILQSYIRGENARRNYIVVGESAIV, and ELDAAIHLQYMVRKWLARKLLNSTQQKNKP. The disordered stretch occupies residues 913–939; that stretch reads STQQKNKPRNEKKKTRRKSTKRVSEDK. The span at 918 to 933 shows a compositional bias: basic residues; it reads NKPRNEKKKTRRKSTK. Residues 953-999 are a coiled coil; the sequence is LADLQSRVLKVEAAIMQKEDENTALQEELQRFEERWLENETRMKSME.

It belongs to the TRAFAC class myosin-kinesin ATPase superfamily. Myosin family. Plant myosin class VIII subfamily. Homodimer.

Its function is as follows. Myosin heavy chain that is required for the cell cycle-regulated transport of various organelles and proteins for their segregation. Functions by binding with its tail domain to receptor proteins on organelles and exerting force with its N-terminal motor domain against actin filaments, thereby transporting its cargo along polarized actin cables. The sequence is that of Myosin-4 (VIII-B) from Arabidopsis thaliana (Mouse-ear cress).